A 514-amino-acid polypeptide reads, in one-letter code: 6-phosphofructo-2-kinase/fructose-2,6-bisphosphatase 3 (514 aa).

Residues 1-245 (MPLELTQSRV…VYYLMNIHVQ (245 aa)) form a 6-phosphofructo-2-kinase region. 42–50 (GLPARGKTY) serves as a coordination point for ATP. Beta-D-fructose 6-phosphate-binding residues include arginine 75 and arginine 99. The active site involves aspartate 125. Threonine 127 and arginine 133 together coordinate beta-D-fructose 6-phosphate. Cysteine 155 is an active-site residue. 164–169 (NIMEVK) is an ATP binding site. Residues lysine 169, arginine 190, and tyrosine 194 each contribute to the beta-D-fructose 6-phosphate site. The segment at 246–514 (PRTIYLCRHG…QPLLGQACLT (269 aa)) is fructose-2,6-bisphosphatase. Residue arginine 253 coordinates beta-D-fructose 2,6-bisphosphate. Histidine 254 (tele-phosphohistidine intermediate) is an active-site residue. Beta-D-fructose 2,6-bisphosphate contacts are provided by asparagine 260 and glycine 266. Catalysis depends on glutamate 323, which acts as the Proton donor/acceptor. Beta-D-fructose 2,6-bisphosphate-binding residues include tyrosine 334, arginine 348, lysine 352, tyrosine 363, glutamine 389, and arginine 393. Residue 345-348 (YALR) coordinates ATP. ATP is bound by residues 389-393 (QAVLR) and tyrosine 425. Positions 444 to 475 (ERSEDAKKGPNPLMRRNSVTPLASPEPTKKPR) are disordered. At serine 461 the chain carries Phosphoserine; by AMPK and PKA. At threonine 463 the chain carries Phosphothreonine. Phosphoserine is present on serine 467. Residue threonine 471 is modified to Phosphothreonine; by PKC.

It in the C-terminal section; belongs to the phosphoglycerate mutase family. Homodimer. Forms a heterodimer with PFKFB2. In terms of processing, phosphorylation by AMPK stimulates activity.

It catalyses the reaction beta-D-fructose 2,6-bisphosphate + H2O = beta-D-fructose 6-phosphate + phosphate. The enzyme catalyses beta-D-fructose 6-phosphate + ATP = beta-D-fructose 2,6-bisphosphate + ADP + H(+). Its function is as follows. Catalyzes both the synthesis and degradation of fructose 2,6-bisphosphate. In Pongo abelii (Sumatran orangutan), this protein is 6-phosphofructo-2-kinase/fructose-2,6-bisphosphatase 3 (PFKFB3).